A 177-amino-acid polypeptide reads, in one-letter code: Peroxiredoxin-2 (177 aa).

Ala2 is modified (N-acetylalanine). Positions 6 to 164 constitute a Thioredoxin domain; sequence ARIGKPAPDF…ALRLVQAFQY (159 aa). The active-site Cysteine sulfenic acid (-SOH) intermediate is the Cys51. Ser112 is modified (phosphoserine).

Belongs to the peroxiredoxin family. AhpC/Prx1 subfamily. As to quaternary structure, homodimer; disulfide-linked, upon oxidation. 5 homodimers assemble to form a ring-like decamer. Interacts with TIPIN. Post-translationally, the enzyme can be inactivated by further oxidation of the cysteine sulfenic acid (C(P)-SOH) to sulphinic acid (C(P)-SO2H) instead of its condensation to a disulfide bond. It can be reactivated by forming a transient disulfide bond with sulfiredoxin SRXN1, which reduces the cysteine sulfinic acid in an ATP- and Mg-dependent manner. Acetylation increases resistance to transition to high molecular-mass complexes. Deacetylated by HDAC6 which decreases reducing activity.

Its subcellular location is the cytoplasm. It catalyses the reaction a hydroperoxide + [thioredoxin]-dithiol = an alcohol + [thioredoxin]-disulfide + H2O. Its function is as follows. Thiol-specific peroxidase that catalyzes the reduction of hydrogen peroxide and organic hydroperoxides to water and alcohols, respectively. Plays a role in cell protection against oxidative stress by detoxifying peroxides and as sensor of hydrogen peroxide-mediated signaling events. Might participate in the signaling cascades of growth factors and tumor necrosis factor-alpha by regulating the intracellular concentrations of H(2)O(2). The chain is Peroxiredoxin-2 (PRDX2) from Pongo abelii (Sumatran orangutan).